A 571-amino-acid polypeptide reads, in one-letter code: Cyclic di-GMP phosphodiesterase TpdA (571 aa).

The next 3 helical transmembrane spans lie at 155–175 (IAWV…YAIN), 321–341 (VYYI…FLVI), and 395–415 (TLIS…AIYA). The region spanning 344–571 (HRSLQAFITY…HQGYFYPLHF (228 aa)) is the EAL domain.

The protein resides in the cell inner membrane. It catalyses the reaction 3',3'-c-di-GMP + H2O = 5'-phosphoguanylyl(3'-&gt;5')guanosine + H(+). In terms of biological role, cyclic di-GMP phosphodiesterase that plays an important role in modulating the global c-di-GMP pool. Its ability to alter the c-di-GMP pool has an effect on swimming motility, swarming motility and biofilm formation, multicellular behaviors that are important for the survival and dissemination of this environmental pathogen. Exhibits a dual function, namely, c-di-GMP degradation and modulation of its own expression. This is Cyclic di-GMP phosphodiesterase TpdA from Vibrio parahaemolyticus serotype O3:K6 (strain RIMD 2210633).